The primary structure comprises 235 residues: 15,16-dihydrobiliverdin:ferredoxin oxidoreductase (235 aa).

This sequence belongs to the HY2 family.

It catalyses the reaction 15,16-dihydrobiliverdin + oxidized 2[4Fe-4S]-[ferredoxin] = biliverdin IXalpha + reduced 2[4Fe-4S]-[ferredoxin] + 2 H(+). In terms of biological role, catalyzes the two-electron reduction of biliverdin IX-alpha at the C15 methine bridge. This Parasynechococcus marenigrum (strain WH8102) protein is 15,16-dihydrobiliverdin:ferredoxin oxidoreductase (pebA).